Here is a 420-residue protein sequence, read N- to C-terminus: Transcription termination factor Rho (420 aa).

Residues 49 to 124 (DIFGGGVLEI…LKVDQVNDDK (76 aa)) form the Rho RNA-BD domain. Residues 170 to 175 (GKGQRG), 182 to 187 (KAGKTM), and Arg213 contribute to the ATP site.

The protein belongs to the Rho family. In terms of assembly, homohexamer. The homohexamer assembles into an open ring structure.

Facilitates transcription termination by a mechanism that involves Rho binding to the nascent RNA, activation of Rho's RNA-dependent ATPase activity, and release of the mRNA from the DNA template. In Haemophilus influenzae (strain ATCC 51907 / DSM 11121 / KW20 / Rd), this protein is Transcription termination factor Rho.